The sequence spans 308 residues: Glycerol-3-phosphate dehydrogenase [NAD(P)+] (308 aa).

Positions 15, 35, 36, and 83 each coordinate NADPH. Residues lysine 83 and glycine 111 each coordinate sn-glycerol 3-phosphate. Residue serine 115 coordinates NADPH. The sn-glycerol 3-phosphate site is built by lysine 166, aspartate 219, serine 229, arginine 230, and asparagine 231. Lysine 166 acts as the Proton acceptor in catalysis. Residue arginine 230 participates in NADPH binding. Glutamate 256 is an NADPH binding site.

This sequence belongs to the NAD-dependent glycerol-3-phosphate dehydrogenase family.

It localises to the cytoplasm. The catalysed reaction is sn-glycerol 3-phosphate + NAD(+) = dihydroxyacetone phosphate + NADH + H(+). The enzyme catalyses sn-glycerol 3-phosphate + NADP(+) = dihydroxyacetone phosphate + NADPH + H(+). It functions in the pathway membrane lipid metabolism; glycerophospholipid metabolism. Functionally, catalyzes the reduction of the glycolytic intermediate dihydroxyacetone phosphate (DHAP) to sn-glycerol 3-phosphate (G3P), the key precursor for phospholipid synthesis. This is Glycerol-3-phosphate dehydrogenase [NAD(P)+] from Synechococcus elongatus (strain ATCC 33912 / PCC 7942 / FACHB-805) (Anacystis nidulans R2).